The following is a 285-amino-acid chain: GTP-binding protein 8 (285 aa).

The 174-residue stretch at 110–283 (RQPEVCFIGR…KCFIADITGS (174 aa)) folds into the EngB-type G domain. GTP-binding positions include 118–125 (GRSNVGKS), 147–151 (GHTKK), 165–168 (DMPG), 227–230 (TKID), and 262–264 (ISA). Residues serine 125 and threonine 149 each coordinate Mg(2+).

The protein belongs to the TRAFAC class TrmE-Era-EngA-EngB-Septin-like GTPase superfamily. EngB GTPase family. Mg(2+) is required as a cofactor.

In Rattus norvegicus (Rat), this protein is GTP-binding protein 8 (Gtpbp8).